Consider the following 711-residue polypeptide: MLNFFAAAPRGYEYALSLELADLGASDIKESVAGVYFSASLELGYRITLWSRIASRIIFVIHKGPCESPEQLYNAAYGIDWQMEFNHRSTFSIDFHGMGGFINNTMFGALKIKDAIVDRFRDDDCPRPDVARVDADFRIDAHYRRGQITIGLNFSGPALHKRGYRDITGEAPLKENLAANMLMRSGWQKNPVSLLDPFCGSGTILIEAAMMACDMAPGLHRERFGFEHWLRHNDKYWQELLDEAKARASIGITRCKTKFYGSDIDSRIVALAKKNAANAGVLELIDFSVTNALNVKVPEETGYLITNPPYGERLGTVTALLQLYYQLGDKFKAEFGGWNLAVLNSDVELLSALKLKADKQMKMNNGALECAFNLYTVHATNTRRVDPSNINREGDVSDIAVPFVNRVKKNIKQLQKWAKKEGIDSYRIYDADLPDYKVAIDKYLDYVVIQEYTAPVDIPESVTKRRLTDVLITLPGAIGIDPNNIILKTREKQKGTNQYEKIQANKLELITTEYGAKFKLNLKEYLDTGLFLDHRLTRKLVGEKSKDRDVLNLFAYTGTASVHAALGGAKSVKTVDMSNTYTNWAKENFALNGLNDDKYQFVQANCMQWIKTTHDKFDLIFIDPPTFSNSKRMEDSFDVLRDHVPLLSSLIKLLNPNGEIIFSNNKRKFKMEIEALEALNFTVKNIDNQTLPLDFKRNPQIHNTWLLTHGG.

In terms of domain architecture, THUMP spans 43-154 (LGYRITLWSR…RGQITIGLNF (112 aa)).

The protein belongs to the methyltransferase superfamily. RlmKL family.

It is found in the cytoplasm. The catalysed reaction is guanosine(2445) in 23S rRNA + S-adenosyl-L-methionine = N(2)-methylguanosine(2445) in 23S rRNA + S-adenosyl-L-homocysteine + H(+). It carries out the reaction guanosine(2069) in 23S rRNA + S-adenosyl-L-methionine = N(2)-methylguanosine(2069) in 23S rRNA + S-adenosyl-L-homocysteine + H(+). Its function is as follows. Specifically methylates the guanine in position 2445 (m2G2445) and the guanine in position 2069 (m7G2069) of 23S rRNA. The protein is Ribosomal RNA large subunit methyltransferase K/L of Shewanella woodyi (strain ATCC 51908 / MS32).